Consider the following 1084-residue polypeptide: Teashirt homolog 1 (1084 aa).

3 disordered regions span residues 49–108 (EETE…SVSY), 140–167 (NSATSNNDASQKESSTPTPTPPTSTAST), and 269–298 (GHYRDDNRDKDSEKTKRWSKPRKRSLMEME). 2 stretches are compositionally biased toward polar residues: residues 57-71 (QSYQNSPVSTATNQD) and 140-152 (NSATSNNDASQKE). 2 consecutive C2H2-type zinc fingers follow at residues 246–270 (FRCKDCSAAYDTLVELTVHMNETGH) and 307–331 (LKCMYCGHSFESLQDLSVHMIKTKH). Basic and acidic residues predominate over residues 269-284 (GHYRDDNRDKDSEKTK). The C2H2-type 3; atypical zinc-finger motif lies at 416 to 440 (LKCMECGSSHDTLQQLTAHMMVTGH). 2 disordered regions span residues 467 to 534 (SIPL…EKFE) and 653 to 728 (TGKV…LKAK). Composition is skewed to basic and acidic residues over residues 496–534 (SEEKKEPEKEKEKEKAPPAAGDAERKIKEETEDATEKFE), 653–671 (TGKVSIKKEERPTEKEKSS), and 681–714 (KENKDLPKTEETGSKPQKKGSDSETGKAKKESTL). Ser771 is subject to Phosphoserine. The disordered stretch occupies residues 855–879 (GRLTPKSSTPSTVSEKSDADGSSFE). Over residues 859–868 (PKSSTPSTVS) the composition is skewed to polar residues. A DNA-binding region (homeobox; atypical) is located at residues 891–961 (RKGRQSNWNP…NVKYQLRRTG (71 aa)). C2H2-type zinc fingers lie at residues 976-998 (FFCNDCASQFRTASTYVSHLETH) and 1044-1067 (FQCKLCNRTFASKHAVKLHLSKTH).

Belongs to the teashirt C2H2-type zinc-finger protein family. Interacts (via homeobox domain) with APBB1 (via PID domain 1).

It localises to the nucleus. Its function is as follows. Probable transcriptional regulator involved in developmental processes. May act as a transcriptional repressor (Potential). This chain is Teashirt homolog 1 (Tshz1), found in Mus musculus (Mouse).